We begin with the raw amino-acid sequence, 202 residues long: LexA repressor (202 aa).

The segment at residues 32–52 (RAEVCSAFGFKSPNAAETHLR) is a DNA-binding region (H-T-H motif). Active-site for autocatalytic cleavage activity residues include Ser121 and Lys158.

Belongs to the peptidase S24 family. As to quaternary structure, homodimer.

The enzyme catalyses Hydrolysis of Ala-|-Gly bond in repressor LexA.. Represses a number of genes involved in the response to DNA damage (SOS response), including recA and lexA. In the presence of single-stranded DNA, RecA interacts with LexA causing an autocatalytic cleavage which disrupts the DNA-binding part of LexA, leading to derepression of the SOS regulon and eventually DNA repair. This chain is LexA repressor, found in Azoarcus sp. (strain BH72).